The primary structure comprises 77 residues: Dermatoxin-S1 (77 aa).

Residues 1 to 22 form the signal peptide; the sequence is MAFLKKSLFLILFLGLVPLSFC. Positions 23–44 are excised as a propeptide; that stretch reads ENDKREGENEEEQDDDQSEEKR. A Glutamine amide modification is found at glutamine 76.

In terms of tissue distribution, expressed by the skin glands.

Its subcellular location is the secreted. The protein localises to the target cell membrane. In terms of biological role, antimicrobial peptide with potent activity against Gram-positive bacteria B.megaterium, C.glutamicum and S.aureus and mollicutes A.laidlawii and S.melliferum. Less active against Gram-negative bacteria B.cepacia, P.aeruginosa, S.typhimurium and S.meliloti. Probably acts by disturbing membrane functions with its amphipathic structure. This is Dermatoxin-S1 from Phyllomedusa sauvagei (Sauvage's leaf frog).